A 396-amino-acid polypeptide reads, in one-letter code: MLSEVLLVSAPGKVILHGEHAVVHGKVALAVALNLRTFLRLQPHSNGRVGLNLPNIGVRRAWDVASLQLLDTSFLGHGDSAALTAKHVEKLKEVAGFPKDCVDPEHLAVLAFLYLYLSICQSQRALPSLDITVWSELPTGAGLGSSAAYSVCLAAALLTACEEIPNPLKDGEAAGRWTEENLELINKWAFQGERVIHGNPSGVDNAVSTWGGALRYQQGKISSLKRPPVLKILLINTKVPRSTKVLVANVRSRLLKFPEIVAPLLTSIDAISLECERVLGEMAAAPTPEHYLTLEELIDMNQHHLNALGVGHASLDQLCQVTTAHGLHSKLTGAGGGGCGITLLRPDVERPAVEATKRALSGCGFDCWETSVGAPGVSVHTAASLDASVQQGLDSL.

Residues Lys13, Asn55, Ser135, and 140–146 (GAGLGSS) each bind ATP. Ser146 (proton donor) is an active-site residue. Residues Ser146 and Glu193 each coordinate Mg(2+). Residue Asp204 is the Proton acceptor of the active site.

This sequence belongs to the GHMP kinase family. Mevalonate kinase subfamily. As to quaternary structure, homodimer. Mg(2+) serves as cofactor.

It is found in the cytoplasm. Its subcellular location is the peroxisome. The catalysed reaction is (R)-mevalonate + ATP = (R)-5-phosphomevalonate + ADP + H(+). The protein operates within isoprenoid biosynthesis; isopentenyl diphosphate biosynthesis via mevalonate pathway; isopentenyl diphosphate from (R)-mevalonate: step 1/3. Farnesyl pyrophosphate and geranyl pyrophosphate inhibit mevalonate kinase activity by binding competitively at the ATP-binding sites. Functionally, catalyzes the phosphorylation of mevalonate to mevalonate 5-phosphate, a key step in isoprenoid and cholesterol biosynthesis. The protein is Mevalonate kinase of Bos taurus (Bovine).